Consider the following 108-residue polypeptide: uncharacterized protein (108 aa).

The protein belongs to the baculoviridae 11 kDa protein family.

This is an uncharacterized protein from Orgyia pseudotsugata (Douglas-fir tussock moth).